The following is a 277-amino-acid chain: F420-dependent methylenetetrahydromethanopterin dehydrogenase (277 aa).

The protein belongs to the MTD family.

It catalyses the reaction 5,10-methylenetetrahydromethanopterin + oxidized coenzyme F420-(gamma-L-Glu)(n) + 2 H(+) = 5,10-methenyl-5,6,7,8-tetrahydromethanopterin + reduced coenzyme F420-(gamma-L-Glu)(n). Its pathway is one-carbon metabolism; methanogenesis from CO(2); 5,10-methylene-5,6,7,8-tetrahydromethanopterin from 5,10-methenyl-5,6,7,8-tetrahydromethanopterin (coenzyme F420 route): step 1/1. Its function is as follows. Catalyzes the reversible reduction of methenyl-H(4)MPT(+) to methylene-H(4)MPT. The protein is F420-dependent methylenetetrahydromethanopterin dehydrogenase of Methanococcus maripaludis (strain DSM 14266 / JCM 13030 / NBRC 101832 / S2 / LL).